Here is a 642-residue protein sequence, read N- to C-terminus: Threonine--tRNA ligase (642 aa).

In terms of domain architecture, TGS spans 1–61 (MPIITLPDGS…SEDANLEIIT (61 aa)). A catalytic region spans residues 243–534 (DHRKIGKALD…ITEEYAGFFP (292 aa)). Residues Cys334, His385, and His511 each contribute to the Zn(2+) site.

The protein belongs to the class-II aminoacyl-tRNA synthetase family. Homodimer. Zn(2+) is required as a cofactor.

It is found in the cytoplasm. It catalyses the reaction tRNA(Thr) + L-threonine + ATP = L-threonyl-tRNA(Thr) + AMP + diphosphate + H(+). Functionally, catalyzes the attachment of threonine to tRNA(Thr) in a two-step reaction: L-threonine is first activated by ATP to form Thr-AMP and then transferred to the acceptor end of tRNA(Thr). Also edits incorrectly charged L-seryl-tRNA(Thr). The sequence is that of Threonine--tRNA ligase from Histophilus somni (strain 129Pt) (Haemophilus somnus).